Reading from the N-terminus, the 346-residue chain is Senescence-specific cysteine protease SAG12 (346 aa).

Positions M1–S25 are cleaved as a signal peptide. N-linked (GlcNAc...) asparagine glycosylation is present at N124. 3 disulfide bridges follow: C151/C192, C185/C225, and C283/C335. C154 is an active-site residue. H289 is a catalytic residue. The N-linked (GlcNAc...) asparagine glycan is linked to N301. Residue N310 is part of the active site.

Belongs to the peptidase C1 family. As to expression, found in senescent leaves, especially in senescence-associated vacuoles- (SAVs) containing cells (e.g. mesophyll and guard cells), and in senescencing ovules of unfertilised pistils.

The protein localises to the vacuole. Its function is as follows. Cysteine protease that may have a developmental senescence specific cell death function during apoptosis, heavy metal detoxification, and hypersensitive response. In Arabidopsis thaliana (Mouse-ear cress), this protein is Senescence-specific cysteine protease SAG12.